We begin with the raw amino-acid sequence, 1358 residues long: Phosphoinositide 3-kinase regulatory subunit 4 (1358 aa).

The N-myristoyl glycine moiety is linked to residue Gly2. The region spanning Phe26–Leu324 is the Protein kinase domain. Residues Leu32–Val40 and Lys53 each bind ATP. The active-site Proton acceptor is the Asp148. HEAT repeat units lie at residues Ile413–Glu450, Ile458–Arg495, and Lys572–Trp610. Phosphoserine is present on residues Ser808, Ser813, Ser853, and Ser865. Residues Leu875 to Ile898 form a disordered region. WD repeat units follow at residues Glu991–Thr1030, Arg1040–Ser1079, Lys1093–Thr1134, Leu1139–Ser1178, Pro1182–Thr1223, and Pro1237–Val1278. Residues Lys1307–Val1326 are disordered. Positions Asp1315–Val1326 are enriched in basic and acidic residues. Thr1316 carries the phosphothreonine modification. The stretch at Gly1327–Lys1358 is one WD 7 repeat.

It belongs to the protein kinase superfamily. Ser/Thr protein kinase family. Component of the PI3K (PI3KC3/PI3K-III/class III phosphatidylinositol 3-kinase) complex the core of which is composed of the catalytic subunit PIK3C3, the regulatory subunit PIK3R4 and BECN1 associating with additional regulatory/auxiliary subunits to form alternative complex forms. Alternative complex forms containing a fourth regulatory subunit in a mutually exclusive manner are PI3K complex I (PI3KC3-C1) containing ATG14, and PI3K complex II (PI3KC3-C2) containing UVRAG. PI3KC3-C1 displays a V-shaped architecture with PIK3R4 serving as a bridge between PIK3C3 and the ATG14:BECN1 subcomplex. Both, PI3KC3-C1 and PI3KC3-C2, can associate with further regulatory subunits, such as RUBCN, SH3GLB1/Bif-1, AMBRA1 and NRBF2. PI3KC3-C1 probably associates with PIK3CB. Interacts with RAB7A in the presence of PIK3C3/VPS34. Interacts with NRBF2. Interacts with ARMC3. Requires Mn(2+) as cofactor. Myristoylated. Post-translationally, probably autophosphorylated. In terms of tissue distribution, ubiquitously expressed.

Its subcellular location is the late endosome. It localises to the cytoplasmic vesicle. It is found in the autophagosome. The protein resides in the membrane. The enzyme catalyses L-seryl-[protein] + ATP = O-phospho-L-seryl-[protein] + ADP + H(+). It catalyses the reaction L-threonyl-[protein] + ATP = O-phospho-L-threonyl-[protein] + ADP + H(+). In terms of biological role, regulatory subunit of the PI3K complex that mediates formation of phosphatidylinositol 3-phosphate; different complex forms are believed to play a role in multiple membrane trafficking pathways: PI3KC3-C1 is involved in initiation of autophagosomes and PI3KC3-C2 in maturation of autophagosomes and endocytosis. Involved in regulation of degradative endocytic trafficking and cytokinesis, probably in the context of PI3KC3-C2. This Homo sapiens (Human) protein is Phosphoinositide 3-kinase regulatory subunit 4 (PIK3R4).